Consider the following 977-residue polypeptide: MMETCARRVLFTAALLVLSTVIAETFSTDSDTDNPLSTETFYSRASGLKQTSSWPGREATATAVDLSSGLGEMTEIPASVSITAAREGHSPKPLQTSTNAADWKTSTTSDETTEHLQSDTELTHNATAQWESPSSASHSITSHHPVTETRTVRDVTDLIDMDTTDSVSHTDSTYISTTNRVGERTLLSVISNSTFAYTQNSSISDAESQTSPWEEKTSGATQVNEETEETVSTVSEQTDPTFEGRNTTSATLETERSTLSQGTESQTGQPSVTGQTAKEVTDIDNPNSTPPLTVTSRDVEETDATSVSSETSYTQTSSDSASSILPFTSSEHNVTSTSQESHNSTLIYSTNTGGSTEFSTGSVSSTAHEETERSSTRIVDETTLHDVTSAPPVLEDVATTIDDSLSKFPSGQSPTIPKTDDQTNTQVVPTSTHRPQVTDEATDEVSTVYSSTTTLTTTTPSVTTRQLQPHYTTVQTQTQHTTIVTTDIIQVLRTTPSTAHHVPTLTTSGPQAPSTADSSDVTTLHLETSTATPGNTTAHGGRATTPFSKSSPGRTTVVVTTGHLTDKSTTETGSATTQMPLRTSASPGHVCGPKTCANGGHCVRSAEGSYYCQCLSAWTGPFCTEDVDECVNSPCPQGSVCVNTGGSFSCECDLGFDLEDGRSCTQVKTFLGTFTVNNSLHLRNLGLHELHREIQQLLNASLSIFHGYRRFTLGKRDGQGVQIPVVSMFSLSSNVTSADVFNSIQMSLNNCSRTYSHCPIKLQHQLSYHVESLCMAQKTKCDVQYSDCSDISGIPNCQCLPGYFKRNPEDMTCRDCGDGLKLVNGKCVECMFGFGGFNCNNFYKLIAVVVSPAGGALLLIVVIALIVTCCKKDKNDINKIIFKSGELQMSPYAEFPKSNRVSMEWGRETIEMQENGSTKNLLQMTDIYYSPALRNSDLERNGLYPFSGLPGSRHSCIYPAQWNPSFLSDDSRRRDYF.

Positions 1 to 27 (MMETCARRVLFTAALLVLSTVIAETFS) are cleaved as a signal peptide. The tract at residues 85–153 (AREGHSPKPL…HPVTETRTVR (69 aa)) is disordered. Residues 93 to 110 (PLQTSTNAADWKTSTTSD) show a composition bias toward polar residues. Residues 112-122 (TTEHLQSDTEL) show a composition bias toward basic and acidic residues. A glycan (N-linked (GlcNAc...) asparagine) is linked at Asn125. Low complexity predominate over residues 132–144 (SPSSASHSITSHH). N-linked (GlcNAc...) asparagine glycans are attached at residues Asn192, Asn200, and Asn246. Composition is skewed to polar residues over residues 200–212 (NSSI…QTSP) and 244–296 (GRNT…TVTS). 3 disordered regions span residues 200–391 (NSSI…TSAP), 404–445 (SLSK…TDEV), and 499–586 (AHHV…TSAS). Over residues 311-323 (TSYTQTSSDSASS) the composition is skewed to low complexity. A compositionally biased stretch (polar residues) spans 325 to 366 (LPFTSSEHNVTSTSQESHNSTLIYSTNTGGSTEFSTGSVSST). N-linked (GlcNAc...) asparagine glycosylation is found at Asn333 and Asn343. The segment covering 367–384 (AHEETERSSTRIVDETTL) has biased composition (basic and acidic residues). 4 stretches are compositionally biased toward polar residues: residues 404 to 435 (SLSK…THRP), 499 to 538 (AHHV…NTTA), 545 to 563 (TPFS…TTGH), and 570 to 586 (TETG…TSAS). Asn535 carries an N-linked (GlcNAc...) asparagine glycan. One can recognise an EGF-like 1 domain in the interval 587–624 (PGHVCGPKTCANGGHCVRSAEGSYYCQCLSAWTGPFCT). 6 disulfides stabilise this stretch: Cys591-Cys602, Cys596-Cys612, Cys614-Cys623, Cys630-Cys641, Cys635-Cys650, and Cys652-Cys664. The EGF-like 2; calcium-binding domain maps to 626–665 (DVDECVNSPCPQGSVCVNTGGSFSCECDLGFDLEDGRSCT). N-linked (GlcNAc...) asparagine glycans are attached at residues Asn677, Asn699, Asn734, and Asn750. A helical membrane pass occupies residues 846–866 (IAVVVSPAGGALLLIVVIALI).

As to quaternary structure, interacts with CCM2 and KRIT1; KRIT1 markedly facilitates interaction with CCM2.

It localises to the cell membrane. It is found in the cell junction. The protein resides in the secreted. Functionally, receptor component of the CCM signaling pathway which is a crucial regulator of heart and vessel formation and integrity. May act through the stabilization of endothelial cell junctions. The sequence is that of Protein HEG (heg) from Danio rerio (Zebrafish).